We begin with the raw amino-acid sequence, 1445 residues long: Spermatogenesis-associated protein 31E1 (1445 aa).

The chain crosses the membrane as a helical span at residues 64–84 (WMMDFILTSVCGLVLLFLLLL). Disordered stretches follow at residues 90-115 (PPSPPPGRKRSSREPQRERSGRSRSR) and 169-262 (VPAK…PDSS). Residues 101-110 (SREPQRERSG) are compositionally biased toward basic and acidic residues. A compositionally biased stretch (pro residues) spans 241–260 (VFPPSPQPHGPLASSPPPPD). N-linked (GlcNAc...) asparagine glycosylation occurs at Asn408. Disordered regions lie at residues 411-430 (TQPQQLPRPQQVSDATTVGN), 460-557 (NPSS…ERTQ), 592-619 (LSQPTAHLPQERPASWSPKSAPILPGVV), and 637-761 (QEQS…KEHL). The segment covering 664 to 681 (PQSQAEDTQQALLPSQPS) has biased composition (polar residues). N-linked (GlcNAc...) asparagine glycosylation is found at Asn819, Asn906, and Asn1160. Disordered regions lie at residues 894 to 966 (FLGK…TCSL), 1143 to 1242 (RLPT…IGDK), 1254 to 1280 (KGQTPPESHFQRKISHHPQGLHPRKGG), and 1378 to 1445 (SPKA…CLAS). Composition is skewed to polar residues over residues 906–915 (NRTTSKSVPT) and 1148–1165 (APLSTSQSVSGKNMTASQ). Over residues 1202 to 1217 (DKGEAHRRPRTGEQGH) the composition is skewed to basic and acidic residues.

Belongs to the SPATA31 family.

It is found in the membrane. Functionally, may play a role in spermatogenesis. The chain is Spermatogenesis-associated protein 31E1 (SPATA31E1) from Homo sapiens (Human).